The chain runs to 445 residues: E3 ubiquitin-protein ligase MYLIP (445 aa).

The region spanning 1-279 is the FERM domain; that stretch reads MLCYVTRPDA…ETHAFYRCDT (279 aa). Fe cation-binding residues include cysteine 360, cysteine 363, and cysteine 368. The RING-type zinc finger occupies 387–422; sequence CMVCCEEEINSTFCPCGHTVCCESCAAQLQSCPVCR. Residues 431 to 433 form a critical for homodimerization region; that stretch reads VYL.

In terms of assembly, homodimer. Interacts with the E2 ubiquitin-conjugating enzyme, UBE2D1 (via RING-type zinc finger). Interacts with myosin regulatory light chain (MRLC) and TMEM4. Post-translationally, autoubiquitinated. As to expression, ubiquitously expressed.

Its subcellular location is the cytoplasm. It is found in the cell membrane. The catalysed reaction is S-ubiquitinyl-[E2 ubiquitin-conjugating enzyme]-L-cysteine + [acceptor protein]-L-lysine = [E2 ubiquitin-conjugating enzyme]-L-cysteine + N(6)-ubiquitinyl-[acceptor protein]-L-lysine.. It participates in protein modification; protein ubiquitination. With respect to regulation, can bind 1 iron ion per dimer. Iron binding seems to decrease LDLR degradation activity. Its function is as follows. E3 ubiquitin-protein ligase that mediates ubiquitination and subsequent proteasomal degradation of myosin regulatory light chain (MRLC), LDLR, VLDLR and LRP8. Activity depends on E2 enzymes of the UBE2D family. Proteasomal degradation of MRLC leads to inhibit neurite outgrowth in presence of NGF by counteracting the stabilization of MRLC by saposin-like protein (CNPY2/MSAP) and reducing CNPY2-stimulated neurite outgrowth. Acts as a sterol-dependent inhibitor of cellular cholesterol uptake by mediating ubiquitination and subsequent degradation of LDLR. This Homo sapiens (Human) protein is E3 ubiquitin-protein ligase MYLIP (MYLIP).